A 530-amino-acid polypeptide reads, in one-letter code: Calcium-dependent protein kinase 14 (530 aa).

G2 carries N-myristoyl glycine lipidation. The 259-residue stretch at 54–312 folds into the Protein kinase domain; the sequence is YKLGRELGRG…AQQVLDHPWI (259 aa). Residues 60 to 68 and K83 each bind ATP; that span reads LGRGEFGVT. D178 (proton acceptor) is an active-site residue. A Phosphoserine modification is found at S218. The interval 318–348 is autoinhibitory domain; the sequence is ASNVSLGETVRARLKQFSVMNKLKKRALRVI. 4 consecutive EF-hand domains span residues 355–390, 391–426, 427–462, and 463–498; these read EETS…LGIV, VPQD…IRKL, GNDE…DVDT, and TSEE…GTDW. Ca(2+) contacts are provided by D368, S370, K374, E379, D404, D406, D408, Y410, E415, D440, N442, S444, Y446, E451, D476, N478, D480, and K482. S484 is modified (phosphoserine). E487 provides a ligand contact to Ca(2+).

This sequence belongs to the protein kinase superfamily. Ser/Thr protein kinase family. CDPK subfamily.

The protein resides in the membrane. It catalyses the reaction L-seryl-[protein] + ATP = O-phospho-L-seryl-[protein] + ADP + H(+). The catalysed reaction is L-threonyl-[protein] + ATP = O-phospho-L-threonyl-[protein] + ADP + H(+). Its activity is regulated as follows. Activated by calcium. Autophosphorylation may play an important role in the regulation of the kinase activity. In terms of biological role, may play a role in signal transduction pathways that involve calcium as a second messenger. The sequence is that of Calcium-dependent protein kinase 14 (CPK14) from Arabidopsis thaliana (Mouse-ear cress).